The primary structure comprises 213 residues: Histidine biosynthesis bifunctional protein HisIE (213 aa).

The tract at residues 1–114 is phosphoribosyl-AMP cyclohydrolase; that stretch reads MLTTEKYQGL…FHPALTDFSF (114 aa). Residues 115–213 form a phosphoribosyl-ATP pyrophosphohydrolase region; that stretch reads LFQLENIISI…RVRSKLKKKH (99 aa).

In the N-terminal section; belongs to the PRA-CH family. It in the C-terminal section; belongs to the PRA-PH family.

It is found in the cytoplasm. It catalyses the reaction 1-(5-phospho-beta-D-ribosyl)-ATP + H2O = 1-(5-phospho-beta-D-ribosyl)-5'-AMP + diphosphate + H(+). The catalysed reaction is 1-(5-phospho-beta-D-ribosyl)-5'-AMP + H2O = 1-(5-phospho-beta-D-ribosyl)-5-[(5-phospho-beta-D-ribosylamino)methylideneamino]imidazole-4-carboxamide. The protein operates within amino-acid biosynthesis; L-histidine biosynthesis; L-histidine from 5-phospho-alpha-D-ribose 1-diphosphate: step 2/9. It functions in the pathway amino-acid biosynthesis; L-histidine biosynthesis; L-histidine from 5-phospho-alpha-D-ribose 1-diphosphate: step 3/9. The chain is Histidine biosynthesis bifunctional protein HisIE from Blochmanniella floridana.